The following is a 180-amino-acid chain: GTP cyclohydrolase 1 (180 aa).

Positions 71, 74, and 142 each coordinate Zn(2+).

Belongs to the GTP cyclohydrolase I family. As to quaternary structure, homomer.

The enzyme catalyses GTP + H2O = 7,8-dihydroneopterin 3'-triphosphate + formate + H(+). The protein operates within cofactor biosynthesis; 7,8-dihydroneopterin triphosphate biosynthesis; 7,8-dihydroneopterin triphosphate from GTP: step 1/1. This is GTP cyclohydrolase 1 from Helicobacter pylori (strain Shi470).